Consider the following 729-residue polypeptide: Fatty acid oxidation complex subunit alpha (729 aa).

The segment at 1 to 189 (MLYQSETLQL…KIGLVDAVVD (189 aa)) is enoyl-CoA hydratase/isomerase. Residue Asp-296 coordinates substrate. Residues 311-729 (AAPKLAAVLG…LLDVSTNQPA (419 aa)) are 3-hydroxyacyl-CoA dehydrogenase. Residues Met-324, Asp-343, 400-402 (VVE), Lys-407, and Ser-429 each bind NAD(+). Catalysis depends on His-450, which acts as the For 3-hydroxyacyl-CoA dehydrogenase activity. Asn-453 lines the NAD(+) pocket. Asn-500 and Tyr-660 together coordinate substrate.

This sequence in the N-terminal section; belongs to the enoyl-CoA hydratase/isomerase family. The protein in the C-terminal section; belongs to the 3-hydroxyacyl-CoA dehydrogenase family. As to quaternary structure, heterotetramer of two alpha chains (FadB) and two beta chains (FadA).

It carries out the reaction a (3S)-3-hydroxyacyl-CoA + NAD(+) = a 3-oxoacyl-CoA + NADH + H(+). The catalysed reaction is a (3S)-3-hydroxyacyl-CoA = a (2E)-enoyl-CoA + H2O. It catalyses the reaction a 4-saturated-(3S)-3-hydroxyacyl-CoA = a (3E)-enoyl-CoA + H2O. The enzyme catalyses (3S)-3-hydroxybutanoyl-CoA = (3R)-3-hydroxybutanoyl-CoA. It carries out the reaction a (3Z)-enoyl-CoA = a 4-saturated (2E)-enoyl-CoA. The catalysed reaction is a (3E)-enoyl-CoA = a 4-saturated (2E)-enoyl-CoA. It functions in the pathway lipid metabolism; fatty acid beta-oxidation. Its function is as follows. Involved in the aerobic and anaerobic degradation of long-chain fatty acids via beta-oxidation cycle. Catalyzes the formation of 3-oxoacyl-CoA from enoyl-CoA via L-3-hydroxyacyl-CoA. It can also use D-3-hydroxyacyl-CoA and cis-3-enoyl-CoA as substrate. In Yersinia pseudotuberculosis serotype IB (strain PB1/+), this protein is Fatty acid oxidation complex subunit alpha.